The primary structure comprises 104 residues: Defensin-2 (104 aa).

Positions 1–19 (MKFFVLFAILIAIVHASCA) are cleaved as a signal peptide. Disulfide bonds link cysteine 64–cysteine 95, cysteine 81–cysteine 100, and cysteine 85–cysteine 102.

The protein belongs to the invertebrate defensin family. Type 1 subfamily. As to expression, low expression in head and thorax.

The protein resides in the secreted. Antibacterial peptide mostly active against Gram-positive bacteria. The chain is Defensin-2 from Apis mellifera (Honeybee).